The following is a 1250-amino-acid chain: DNA excision repair protein ERCC-6-like (1250 aa).

Residue S14 is modified to Phosphoserine. The TPR 1 repeat unit spans residues 21–54 (YLRYVKEAKEATKNGDLEEAFKLFNLAKDIFPNE). Positions 109–277 (SLYRDGRKGG…WSLFDFACQG (169 aa)) constitute a Helicase ATP-binding domain. 122 to 129 (DDMGLGKT) is a binding site for ATP. The DEAH box motif lies at 228–231 (DEAH). The Helicase C-terminal domain maps to 464 to 620 (FLMDLLKRLR…EKKNPFRYFS (157 aa)). A disordered region spans residues 735–768 (VFPSSTKKKCPKLNKPQPQPSPLLSTHHTQEEDI). A phosphoserine mark is found at S755, S774, S807, and S810. Phosphothreonine is present on T813. Residue S820 is modified to Phosphoserine. Residues 926–946 (SALQDAQASEAKLEEEPSASS) form a disordered region. 5 positions are modified to phosphoserine: S969, S971, S995, S1004, and S1028. The interval 1061–1092 (ASTPKNDISPPGRFFSSQIPSSVNKSMNSRRS) is disordered. T1063 bears the Phosphothreonine; by PLK1 mark. Residue S1069 is modified to Phosphoserine. Polar residues predominate over residues 1075 to 1087 (FSSQIPSSVNKSM). Phosphoserine is present on residues S1098 and S1118. A disordered region spans residues 1110–1199 (MEERLDDSSE…QDKAAEATND (90 aa)). A compositionally biased stretch (basic and acidic residues) spans 1115–1124 (DDSSEAKGPE). Over residues 1125–1135 (DYPEEGVEESS) the composition is skewed to acidic residues. A compositionally biased stretch (polar residues) spans 1149–1173 (ETLSSENKSSWLMTSKPSALAQETS). S1181 and S1188 each carry phosphoserine. The TPR 2 repeat unit spans residues 1200–1233 (YETLVKRGKELKECGKIQEALNCLVKALDIKSAD).

It belongs to the SNF2/RAD54 helicase family. Interacts with PLK1, which phosphorylates it. Both proteins are mutually dependent on each other for correct subcellular localization. Interacts (via N-terminal TPR repeat) with BEND3 (via BEN domains 1 and 3); the interaction is direct. In terms of processing, phosphorylation by PLK1 prevents the association with chromosome arms and restricts its localization to the kinetochore-centromere region.

It localises to the chromosome. It is found in the centromere. Its subcellular location is the kinetochore. The catalysed reaction is ATP + H2O = ADP + phosphate + H(+). Functionally, DNA helicase that acts as a tension sensor that associates with catenated DNA which is stretched under tension until it is resolved during anaphase. Functions as ATP-dependent DNA translocase. Can promote Holliday junction branch migration (in vitro). The polypeptide is DNA excision repair protein ERCC-6-like (ERCC6L) (Homo sapiens (Human)).